Consider the following 147-residue polypeptide: Ubiquitin-conjugating enzyme E2 2 (147 aa).

The UBC core domain maps to 1–147; it reads MALKRIQKEL…AREWTQKYAM (147 aa). C85 serves as the catalytic Glycyl thioester intermediate.

It belongs to the ubiquitin-conjugating enzyme family. In terms of assembly, interacts with the brc-1-brd-1 heterodimer following ionizing irradiation. Expressed in the nervous system.

It localises to the nucleus. It is found in the chromosome. The protein localises to the cytoplasm. It carries out the reaction S-ubiquitinyl-[E1 ubiquitin-activating enzyme]-L-cysteine + [E2 ubiquitin-conjugating enzyme]-L-cysteine = [E1 ubiquitin-activating enzyme]-L-cysteine + S-ubiquitinyl-[E2 ubiquitin-conjugating enzyme]-L-cysteine.. It participates in protein modification; protein ubiquitination. In terms of biological role, catalyzes the covalent attachment of ubiquitin to other proteins. Mediates the selective degradation of short-lived and abnormal proteins. Plays a role in the DNA damage response. In particular, in response to ionizing radiation, associates with the E3 ubiquitin-protein ligase brc-1-brd-1 heterodimer on chromatin to activate E3-ubiquitin ligase activity of the heterodimer, and thus its DNA damage repair mechanisms. Required, cell autonomously, for death of the linker cell, a male-specific cell which guides the elongation of the gonad; perhaps acting as part of the ubiquitin proteasome system (UPS) and modulated by heat shock transcription factor hsf-1. This is Ubiquitin-conjugating enzyme E2 2 from Caenorhabditis elegans.